Consider the following 402-residue polypeptide: NADH-quinone oxidoreductase subunit D (402 aa).

Belongs to the complex I 49 kDa subunit family. In terms of assembly, NDH-1 is composed of 14 different subunits. Subunits NuoB, C, D, E, F, and G constitute the peripheral sector of the complex.

It is found in the cell inner membrane. It carries out the reaction a quinone + NADH + 5 H(+)(in) = a quinol + NAD(+) + 4 H(+)(out). NDH-1 shuttles electrons from NADH, via FMN and iron-sulfur (Fe-S) centers, to quinones in the respiratory chain. The immediate electron acceptor for the enzyme in this species is believed to be ubiquinone. Couples the redox reaction to proton translocation (for every two electrons transferred, four hydrogen ions are translocated across the cytoplasmic membrane), and thus conserves the redox energy in a proton gradient. The sequence is that of NADH-quinone oxidoreductase subunit D from Maricaulis maris (strain MCS10) (Caulobacter maris).